The sequence spans 733 residues: Catalase-peroxidase (733 aa).

Residues 1–24 (MTDDSTCPVTGGADKQVTGRGQSY) are disordered. The segment at residues 96 to 219 (WHSAGTYRTL…LAAVQMGLIY (124 aa)) is a cross-link (tryptophyl-tyrosyl-methioninium (Trp-Tyr) (with M-245)). His97 acts as the Proton acceptor in catalysis. Residues 219-245 (YVNPEGPNGKPDPVAAAKDIRETFARM) constitute a cross-link (tryptophyl-tyrosyl-methioninium (Tyr-Met) (with W-96)). Residue His260 coordinates heme b.

It belongs to the peroxidase family. Peroxidase/catalase subfamily. Homodimer or homotetramer. It depends on heme b as a cofactor. In terms of processing, formation of the three residue Trp-Tyr-Met cross-link is important for the catalase, but not the peroxidase activity of the enzyme.

It catalyses the reaction H2O2 + AH2 = A + 2 H2O. The enzyme catalyses 2 H2O2 = O2 + 2 H2O. Its function is as follows. Bifunctional enzyme with both catalase and broad-spectrum peroxidase activity. This chain is Catalase-peroxidase, found in Methanoregula boonei (strain DSM 21154 / JCM 14090 / 6A8).